A 381-amino-acid polypeptide reads, in one-letter code: NF-kappa-B inhibitor-like protein 1 (381 aa).

Residues 1-32 form a disordered region; it reads MSNPSPQAPEEEASTSVCRPQSSMASVSRRHR. The span at 14-26 shows a compositional bias: polar residues; sequence STSVCRPQSSMAS. 2 ANK repeats span residues 64–93 and 97–133; these read GQPP…DPAH and HGDT…IKNK. 3 disordered regions span residues 129–166, 186–242, and 257–294; these read GIKN…REWR, DDAS…QEEE, and LCES…RGSL. Serine 150 is modified (phosphoserine). Over residues 150–159 the composition is skewed to acidic residues; it reads SAEEEEDEEV. Composition is skewed to basic and acidic residues over residues 204–228 and 257–270; these read RLAR…RPPR and LCES…EAQG.

In terms of assembly, interacts with CACTIN (via N-terminal domain); the interaction occurs in a pro-inflammatory-independent manner.

The protein localises to the nucleus. Functionally, involved in the regulation of innate immune response. Acts as negative regulator of Toll-like receptor and interferon-regulatory factor (IRF) signaling pathways. Contributes to the negative regulation of transcriptional activation of NF-kappa-B target genes in response to endogenous pro-inflammatory stimuli. This Rattus norvegicus (Rat) protein is NF-kappa-B inhibitor-like protein 1 (Nfkbil1).